Reading from the N-terminus, the 250-residue chain is Triosephosphate isomerase (250 aa).

Substrate is bound at residue 9–11 (NWK). H96 functions as the Electrophile in the catalytic mechanism. Residue E168 is the Proton acceptor of the active site. Substrate-binding positions include G174, S216, and 237–238 (GG).

Belongs to the triosephosphate isomerase family. Homodimer.

The protein localises to the cytoplasm. It catalyses the reaction D-glyceraldehyde 3-phosphate = dihydroxyacetone phosphate. Its pathway is carbohydrate biosynthesis; gluconeogenesis. It participates in carbohydrate degradation; glycolysis; D-glyceraldehyde 3-phosphate from glycerone phosphate: step 1/1. In terms of biological role, involved in the gluconeogenesis. Catalyzes stereospecifically the conversion of dihydroxyacetone phosphate (DHAP) to D-glyceraldehyde-3-phosphate (G3P). The polypeptide is Triosephosphate isomerase (Leptospira interrogans serogroup Icterohaemorrhagiae serovar Lai (strain 56601)).